Here is a 61-residue protein sequence, read N- to C-terminus: Small ribosomal subunit protein bS21 (61 aa).

Belongs to the bacterial ribosomal protein bS21 family.

The sequence is that of Small ribosomal subunit protein bS21 from Leuconostoc mesenteroides subsp. mesenteroides (strain ATCC 8293 / DSM 20343 / BCRC 11652 / CCM 1803 / JCM 6124 / NCDO 523 / NBRC 100496 / NCIMB 8023 / NCTC 12954 / NRRL B-1118 / 37Y).